Here is a 182-residue protein sequence, read N- to C-terminus: Putative manganese efflux pump MntP 2 (182 aa).

Transmembrane regions (helical) follow at residues 2–22, 37–57, 63–83, 104–123, 127–149, and 162–182; these read IELT…SIAL, AGGF…YLGV, IGGI…LKMI, LLLL…LTLT, LPLW…GGVH, and AEYL…IEHS.

Belongs to the MntP (TC 9.B.29) family.

It localises to the cell inner membrane. In terms of biological role, probably functions as a manganese efflux pump. This Wolinella succinogenes (strain ATCC 29543 / DSM 1740 / CCUG 13145 / JCM 31913 / LMG 7466 / NCTC 11488 / FDC 602W) (Vibrio succinogenes) protein is Putative manganese efflux pump MntP 2.